Here is a 610-residue protein sequence, read N- to C-terminus: UvrABC system protein C (610 aa).

A GIY-YIG domain is found at 16-94; it reads SQPGVYRMYD…IQRYQPRYNV (79 aa). Residues 204-239 form the UVR domain; sequence SQVIEGLIKRMEEASQALRFEEAARIRDQIHAVRQV.

The protein belongs to the UvrC family. Interacts with UvrB in an incision complex.

It is found in the cytoplasm. Its function is as follows. The UvrABC repair system catalyzes the recognition and processing of DNA lesions. UvrC both incises the 5' and 3' sides of the lesion. The N-terminal half is responsible for the 3' incision and the C-terminal half is responsible for the 5' incision. The protein is UvrABC system protein C of Proteus mirabilis (strain HI4320).